The sequence spans 269 residues: Large ribosomal subunit protein uL3m (269 aa).

Residues 1-19 (MSKFLQGSIFSISKLHVRY) constitute a mitochondrion transit peptide.

Belongs to the universal ribosomal protein uL3 family. Component of the mitochondrial large ribosomal subunit (mt-LSU). Mature yeast 74S mitochondrial ribosomes consist of a small (37S) and a large (54S) subunit. The 37S small subunit contains a 15S ribosomal RNA (15S mt-rRNA) and 34 different proteins. The 54S large subunit contains a 21S rRNA (21S mt-rRNA) and 46 different proteins.

The protein localises to the mitochondrion. Its function is as follows. Component of the mitochondrial ribosome (mitoribosome), a dedicated translation machinery responsible for the synthesis of mitochondrial genome-encoded proteins, including at least some of the essential transmembrane subunits of the mitochondrial respiratory chain. The mitoribosomes are attached to the mitochondrial inner membrane and translation products are cotranslationally integrated into the membrane. This is Large ribosomal subunit protein uL3m (MRPL9) from Saccharomyces cerevisiae (strain ATCC 204508 / S288c) (Baker's yeast).